A 236-amino-acid polypeptide reads, in one-letter code: Lectin (236 aa).

An N-linked (GlcNAc...) asparagine glycan is attached at asparagine 118.

Belongs to the leguminous lectin family. In terms of assembly, homodimer of noncovalently associated chains.

D-mannose and D-glucose specific lectin. The chain is Lectin from Onobrychis viciifolia (Common sainfoin).